The following is a 312-amino-acid chain: Small kinetochore-associated protein (312 aa).

The span at 1 to 13 (MATHKAEAQETDF) shows a compositional bias: basic and acidic residues. Disordered stretches follow at residues 1–32 (MATH…PSSR), 55–176 (LKRS…KDKN), and 221–242 (KGLN…DPTD). Residues 75–84 (RPTTMASSKT) show a composition bias toward polar residues. 2 stretches are compositionally biased toward basic and acidic residues: residues 131 to 143 (DVTK…RENG) and 166 to 176 (QKPEEDLKDKN). Positions 156-312 (IRSSYKPLSK…LEEMEQLLEM (157 aa)) are interaction with SPAG5. Residues 169 to 210 (EEDLKDKNELLEAVNKQLHQKLTETQGELKDLTQKVELLEKF) adopt a coiled-coil conformation. The stretch at 246–288 (LLETLKDELKLFNETAKKQMEELQALKVKLKLKEKERIQFLEQ) forms a coiled coil.

In terms of assembly, part of an astrin (SPAG5)-kinastrin (SKAP) complex containing KNSTRN, SPAG5, PLK1, DYNLL1 and SGO2. Interacts with SPAG5. Directly binds to microtubules, although at relatively low affinity. Interacts with CENPE; this interaction greatly favors microtubule-binding. Interacts with DSN1/MIS13; leading to localization to kinetochores. Interacts with MAPRE1/EB1; leading to localization to the microtubule plus ends. Interacts with PRPF19. Interacts with DYNLL1. Interacts with MAP4.

Its subcellular location is the nucleus. The protein localises to the chromosome. The protein resides in the centromere. It localises to the kinetochore. It is found in the cytoplasm. Its subcellular location is the cytoskeleton. The protein localises to the spindle pole. The protein resides in the microtubule organizing center. Its function is as follows. Essential component of the mitotic spindle required for faithful chromosome segregation and progression into anaphase. Promotes the metaphase-to-anaphase transition and is required for chromosome alignment, normal timing of sister chromatid segregation, and maintenance of spindle pole architecture. The astrin (SPAG5)-kinastrin (SKAP) complex promotes stable microtubule-kinetochore attachments. Required for kinetochore oscillations and dynamics of microtubule plus-ends during live cell mitosis, possibly by forming a link between spindle microtubule plus-ends and mitotic chromosomes to achieve faithful cell division. This chain is Small kinetochore-associated protein (Knstrn), found in Rattus norvegicus (Rat).